The chain runs to 176 residues: Large ribosomal subunit protein uL6 (176 aa).

The segment covering 151 to 170 has biased composition (basic and acidic residues); sequence RPPEPYKGKGVRYADEQVRR. The segment at 151-176 is disordered; the sequence is RPPEPYKGKGVRYADEQVRRKEAKKK.

Belongs to the universal ribosomal protein uL6 family. As to quaternary structure, part of the 50S ribosomal subunit.

Functionally, this protein binds to the 23S rRNA, and is important in its secondary structure. It is located near the subunit interface in the base of the L7/L12 stalk, and near the tRNA binding site of the peptidyltransferase center. In Shewanella halifaxensis (strain HAW-EB4), this protein is Large ribosomal subunit protein uL6.